The chain runs to 348 residues: Small ribosomal subunit protein mS45 (348 aa).

Positions 37–57 (SCSSSSPQSSQPTTHQQQCSS) are enriched in low complexity. The interval 37–63 (SCSSSSPQSSQPTTHQQQCSSFSTTAP) is disordered.

Belongs to the mitochondrion-specific ribosomal protein mS45 family. In terms of assembly, component of the mitochondrial small ribosomal subunit (mt-SSU). Mature N.crassa 74S mitochondrial ribosomes consist of a small (37S) and a large (54S) subunit. The 37S small subunit contains a 16S ribosomal RNA (16S mt-rRNA) and 32 different proteins. The 54S large subunit contains a 23S rRNA (23S mt-rRNA) and 42 different proteins.

It is found in the mitochondrion. Component of the mitochondrial ribosome (mitoribosome), a dedicated translation machinery responsible for the synthesis of mitochondrial genome-encoded proteins, including at least some of the essential transmembrane subunits of the mitochondrial respiratory chain. The mitoribosomes are attached to the mitochondrial inner membrane and translation products are cotranslationally integrated into the membrane. The chain is Small ribosomal subunit protein mS45 (mrps35) from Neurospora crassa (strain ATCC 24698 / 74-OR23-1A / CBS 708.71 / DSM 1257 / FGSC 987).